The sequence spans 134 residues: TSC22 domain family protein 3 (134 aa).

The AP1-binding stretch occupies residues 1-60 (MNTEMYQTPMEVAVYQLHNFSISFFSSLLGGDVVSVKLDNSASGASVVALDNKIEQAMDL). Residues 76 to 97 (LKEQIRELVEKNSQLERENTLL) are leucine-zipper. The disordered stretch occupies residues 101 to 134 (ASPEQLEKFQSRLSPEEPAPEAPETPEAPGGSAV). Residue S102 is modified to Phosphoserine. A Phosphothreonine modification is found at T125. Low complexity predominate over residues 125-134 (TPEAPGGSAV).

It belongs to the TSC-22/Dip/Bun family. Can form homodimers, however it is likely to function as a monomer. Interacts with NFKB1. Interacts (via N-terminus) with JUN and FOS; these interactions inhibit the binding of active AP1 to its target DNA. Interacts with MYOD1. Interacts with HDAC1; this interaction affects HDAC1 activity on MYOG promoter and thus inhibits MYOD1 transcriptional activity.

Its subcellular location is the cytoplasm. The protein resides in the nucleus. Protects T-cells from IL2 deprivation-induced apoptosis through the inhibition of FOXO3A transcriptional activity that leads to the down-regulation of the pro-apoptotic factor BCL2L11. In macrophages, plays a role in the anti-inflammatory and immunosuppressive effects of glucocorticoids and IL10. In T-cells, inhibits anti-CD3-induced NFKB1 nuclear translocation and thereby NFKB1 DNA-binding activities. In vitro, suppresses AP-1 transcription factor complex DNA-binding activities. The polypeptide is TSC22 domain family protein 3 (Tsc22d3) (Rattus norvegicus (Rat)).